We begin with the raw amino-acid sequence, 230 residues long: Vacuole-localized protein 4 (230 aa).

The signal sequence occupies residues 1 to 19 (MRVSSAIFTIASGIAAVSA).

The protein resides in the vacuole. In terms of biological role, vacuolar protein required for aerial conidiation and conidial maturation. Also involved in blastospore production and cell cycle. Plays a vital role in the secretion of Pr1 proteases for cuticular penetration and hence contributes significantly to host infection and virulence. The polypeptide is Vacuole-localized protein 4 (Beauveria bassiana (strain ARSEF 2860) (White muscardine disease fungus)).